A 438-amino-acid polypeptide reads, in one-letter code: MPCTCTWRNWRQWIRPLVAVIYLVSIVVAVPLCVWELQKLEVGIHTKAWFIAGIFLLLTIPISLWVILQHLVHYTQPELQKPIIRILWMVPIYSLDSWIALKYPGIAIYVDTCRECYEAYVIYNFMGFLTNYLTNRYPNLVLILEAKDQQKHFPPLCCCPPWAMGEVLLFRCKLGVLQYTVVRPFTTIVALICELLGIYDEGNFSFSNAWTYLVIINNMSQLFAMYCLLLFYKVLKEELSPIQPVGKFLCVKLVVFVSFWQAVVIALLVKVGVISEKHTWEWQTVEAVATGLQDFIICIEMFLAAIAHHYTFSYKPYVQEAEEGSCFDSFLAMWDVSDIRDDISEQVRHVGRTVRGHPRKKLFPEDQDQNEHTSLLSSSSQDAISIASSMPPSPMGHYQGFGHTVTPQTTPTTAKISDEILSDTIGEKKEPSDKSVDS.

Helical transmembrane passes span 17-37, 48-68, 86-106, 179-199, 212-232, 254-274, and 287-307; these read LVAV…VWEL, AWFI…WVIL, ILWM…YPGI, YTVV…LGIY, YLVI…LLFY, VVFV…VGVI, and AVAT…AAIA. The segment at 355 to 438 is disordered; that stretch reads RGHPRKKLFP…KEPSDKSVDS (84 aa). 2 stretches are compositionally biased toward low complexity: residues 374–390 and 404–413; these read SLLS…ASSM and TVTPQTTPTT. The residue at position 422 (S422) is a Phosphoserine. Basic and acidic residues predominate over residues 425–438; that stretch reads IGEKKEPSDKSVDS.

It belongs to the TMEM184 family. As to expression, widely expressed with higher expression in lung, kidney, spleen, pancreas, thymus, prostate, testis, ovary, small intestine and thyroid.

The protein resides in the membrane. In terms of biological role, possible tumor suppressor which may play a role in cell growth. The chain is Transmembrane protein 184C (TMEM184C) from Homo sapiens (Human).